Consider the following 125-residue polypeptide: MNVVRVWPFSTRTIPCTTTVAAWWTCCVTVTATGADKATDADAASSETLENFIFVSFIKGMVLFYDGLFRGTMIPRANRSITAICNTLRQAYIYTKIQSIAFERRLCFQNITYREVREIHEMYCK.

This is an uncharacterized protein from Saccharomyces cerevisiae (strain ATCC 204508 / S288c) (Baker's yeast).